Here is a 700-residue protein sequence, read N- to C-terminus: Stonustoxin subunit beta (700 aa).

Positions 2 to 264 (PSDILVVAAL…EAPQLMADSS (263 aa)) are structural MACPF/CDC pore-forming domain. The segment at 265–384 (TPILRKVRNT…DILTKAKPKV (120 aa)) is structural FAT domain. A thioredoxin (THX) domain region spans residues 385 to 514 (IFNQGVLFKG…PYMPGVESIK (130 aa)). Residues 506-700 (YMPGVESIKD…QKVNGQIKLL (195 aa)) form the B30.2/SPRY domain.

The protein belongs to the SNTX/VTX toxin family. As to quaternary structure, heterodimer of alpha and beta subunits; non-covalently linked. Post-translationally, intrachain disulfide bonds may be present in the heterodimer. In terms of processing, not glycosylated. Expressed by the venom gland.

The protein localises to the secreted. This lethal (towards mammals) heterodimer induces hemolytic activities due to its ability to form pores in the cell membrane. The pore may be composed of 10 SNTX-alpha/beta heterodimers. The toxin elicits potent hypotension which is endothelium-dependent and appears to be mediated by the nitric oxide pathway and activation of potassium channels. In addition, it displays edema-inducing activities, increases vascular permeability. It also shows myotoxic activities and interferes irreversibly with neuromuscular function. It also induces irreversible platelet aggregation in rabbit or rat but not in human or mouse whole blood. In addition, it has been observed to increase spontaneous quantal acetylcholine release from isolated frog cutaneous pectoris motor endings. The polypeptide is Stonustoxin subunit beta (Synanceia horrida (Estuarine stonefish)).